The primary structure comprises 608 residues: CTP synthase (608 aa).

Residues 1-271 (MGQAHITKHI…DAYVVRRLGL (271 aa)) are amidoligase domain. CTP is bound at residue Ser-18. Ser-18 serves as a coordination point for UTP. Residues 19–24 (SLGKGL) and Asp-76 contribute to the ATP site. Mg(2+) is bound by residues Asp-76 and Glu-145. CTP contacts are provided by residues 152 to 154 (DIE), 192 to 197 (KTKPTQ), and Lys-228. UTP-binding positions include 192 to 197 (KTKPTQ) and Lys-228. The 250-residue stretch at 296-545 (TIAIVGKYVD…VAAAVAHADR (250 aa)) folds into the Glutamine amidotransferase type-1 domain. Residue Gly-359 coordinates L-glutamine. Cys-386 serves as the catalytic Nucleophile; for glutamine hydrolysis. L-glutamine contacts are provided by residues 387 to 390 (LGLQ), Glu-410, and Arg-471. Catalysis depends on residues His-518 and Glu-520. The disordered stretch occupies residues 550 to 608 (LPVDLPSEDAPTPENGVPENGAAQTRGVTAGRSGGSIRRGASASRPSVSSNGTAALVSP). The span at 584–594 (GSIRRGASASR) shows a compositional bias: low complexity.

It belongs to the CTP synthase family. Homotetramer.

It carries out the reaction UTP + L-glutamine + ATP + H2O = CTP + L-glutamate + ADP + phosphate + 2 H(+). The catalysed reaction is L-glutamine + H2O = L-glutamate + NH4(+). The enzyme catalyses UTP + NH4(+) + ATP = CTP + ADP + phosphate + 2 H(+). It participates in pyrimidine metabolism; CTP biosynthesis via de novo pathway; CTP from UDP: step 2/2. Allosterically activated by GTP, when glutamine is the substrate; GTP has no effect on the reaction when ammonia is the substrate. The allosteric effector GTP functions by stabilizing the protein conformation that binds the tetrahedral intermediate(s) formed during glutamine hydrolysis. Inhibited by the product CTP, via allosteric rather than competitive inhibition. Catalyzes the ATP-dependent amination of UTP to CTP with either L-glutamine or ammonia as the source of nitrogen. Regulates intracellular CTP levels through interactions with the four ribonucleotide triphosphates. The sequence is that of CTP synthase from Frankia casuarinae (strain DSM 45818 / CECT 9043 / HFP020203 / CcI3).